Consider the following 668-residue polypeptide: Patellin-5 (668 aa).

The segment at 1 to 263 is disordered; the sequence is MSQDSATTTP…STTTSTVASR (263 aa). 4 stretches are compositionally biased toward basic and acidic residues: residues 55-68, 82-100, 107-125, and 132-150; these read ESNH…EKVT, AAED…ETAK, TAED…ETVK, and VAED…ETVK. Residues 170–186 are compositionally biased toward polar residues; that stretch reads TPETETSEADTSLLVTS. Residues 218–231 show a composition bias toward acidic residues; sequence VEDWTEPELPDEAV. Positions 244–254 are enriched in pro residues; it reads PEPQTPPPPPS. At Ser-290 the chain carries Phosphoserine. The CRAL-TRIO domain maps to 377 to 552; the sequence is DENLGDDLDK…QYGGLSVDNC (176 aa). In terms of domain architecture, GOLD spans 556-662; that stretch reads SDFTHDDIAT…KKMLIYRFKV (107 aa).

This sequence belongs to the patellin family.

It is found in the membrane. The protein resides in the cytoplasm. In terms of biological role, carrier protein that may be involved in membrane-trafficking events associated with cell plate formation during cytokinesis. Binds to some hydrophobic molecules such as phosphoinositides and promotes their transfer between the different cellular sites. This Arabidopsis thaliana (Mouse-ear cress) protein is Patellin-5 (PATL5).